A 1052-amino-acid polypeptide reads, in one-letter code: CCAAT/enhancer-binding protein zeta (1052 aa).

Disordered regions lie at residues 1–40 (MSAD…KNGF), 122–158 (VENK…VSKA), and 621–677 (SQLD…AEKP). Acidic residues predominate over residues 23 to 34 (EDPDEEDEEDGD). Residues 122 to 150 (VENKKQKATEGKKTSEKKVKNKTVAEQRP) show a composition bias toward basic and acidic residues. Over residues 627-643 (PESDEENFVDVGDDSDD) the composition is skewed to acidic residues. A phosphoserine mark is found at S629 and S641. Basic and acidic residues predominate over residues 644–677 (EKFTDADKGTATDAVKEVESKETEPESSAEAEKP). S837 carries the phosphoserine modification. A disordered region spans residues 876–969 (KGAKADLEDS…QGQKKKKKSF (94 aa)). Residues 883-932 (EDSESSDGELGDLDDDEVSLGSMNDEDFEIDEDGGTFMDVSDDESEDAPE) are compositionally biased toward acidic residues. Phosphoserine is present on residues S958, S972, and S977. Positions 1032–1052 (KKKKNFRKKMKAPQKPKRQRK) are disordered.

Belongs to the CBF/MAK21 family. As to expression, ubiquitous.

It is found in the nucleus. Functionally, stimulates transcription from the HSP70 promoter. The sequence is that of CCAAT/enhancer-binding protein zeta (Cebpz) from Mus musculus (Mouse).